A 289-amino-acid polypeptide reads, in one-letter code: Probable ABC transporter permease protein BruAb2_0483 (289 aa).

6 helical membrane-spanning segments follow: residues 9 to 29 (FLIL…VVHL), 70 to 90 (VWTV…AIIL), 99 to 119 (VARV…AIFW), 144 to 166 (IQWL…LVTV), 213 to 233 (IAIV…WVMT), and 258 to 278 (FGEA…FTVI). Residues 65–279 (LWRTAVWTVA…AILLVFTVIY (215 aa)) enclose the ABC transmembrane type-1 domain.

Belongs to the binding-protein-dependent transport system permease family. The complex is composed of two ATP-binding proteins (BruAb2_0487), two transmembrane proteins (BruAb2_0483) and a solute-binding protein (BruAb2_0484).

It localises to the cell inner membrane. Probably part of an ABC transporter complex. Probably responsible for the translocation of the substrate across the membrane. The polypeptide is Probable ABC transporter permease protein BruAb2_0483 (Brucella abortus biovar 1 (strain 9-941)).